Here is a 302-residue protein sequence, read N- to C-terminus: Sulfate adenylyltransferase subunit 2 (302 aa).

This sequence belongs to the PAPS reductase family. CysD subfamily. Heterodimer composed of CysD, the smaller subunit, and CysN.

The enzyme catalyses sulfate + ATP + H(+) = adenosine 5'-phosphosulfate + diphosphate. Its pathway is sulfur metabolism; hydrogen sulfide biosynthesis; sulfite from sulfate: step 1/3. In terms of biological role, with CysN forms the ATP sulfurylase (ATPS) that catalyzes the adenylation of sulfate producing adenosine 5'-phosphosulfate (APS) and diphosphate, the first enzymatic step in sulfur assimilation pathway. APS synthesis involves the formation of a high-energy phosphoric-sulfuric acid anhydride bond driven by GTP hydrolysis by CysN coupled to ATP hydrolysis by CysD. The chain is Sulfate adenylyltransferase subunit 2 from Xanthomonas oryzae pv. oryzae (strain MAFF 311018).